Here is a 102-residue protein sequence, read N- to C-terminus: Plastocyanin (102 aa).

The Plastocyanin-like domain maps to 1-102; sequence AKVEVGDEVG…ANMKGTLTVK (102 aa). Cu cation is bound by residues His37, Cys87, His90, and Met95.

This sequence belongs to the plastocyanin family. Cu(2+) serves as cofactor.

The protein localises to the plastid. It localises to the chloroplast thylakoid membrane. Participates in electron transfer between P700 and the cytochrome b6-f complex in photosystem I. This Dryopteris crassirhizoma (Thick stemmed wood fern) protein is Plastocyanin (PETE).